Reading from the N-terminus, the 195-residue chain is Cysteine/O-acetylserine efflux protein (195 aa).

The Periplasmic portion of the chain corresponds to 1–9; the sequence is MTPMLLSAF. Residues 10–32 form a helical membrane-spanning segment; sequence WTYTLITALTPGPNNILALSAAT. Residues 33 to 46 lie on the Cytoplasmic side of the membrane; sequence AHGFRQSIRVLAGM. Residues 47–67 form a helical membrane-spanning segment; it reads SLGFLVVMLLCAGIAFSLAVI. The Periplasmic portion of the chain corresponds to 68 to 69; sequence DP. The chain crosses the membrane as a helical span at residues 70–90; sequence AIIHLLSWVGAAYILWLAWKI. Residues 91–104 lie on the Cytoplasmic side of the membrane; sequence ATSPAADEKVRPKP. The helical transmembrane segment at 105–125 threads the bilayer; that stretch reads VGFWVSFGLQFVNVKIILYGI. Residues 126 to 141 lie on the Periplasmic side of the membrane; sequence TALSTFVLPQTQALNW. Residues 142–162 traverse the membrane as a helical segment; the sequence is VIGVSILLALIGTFGNVCWAL. Residues 163–176 are Cytoplasmic-facing; that stretch reads AGHLFQRAFRHYGR. Residues 177-194 traverse the membrane as a helical segment; it reads QLNIILALLLVYCAVRIF. Position 195 (Tyr195) is a topological domain, periplasmic.

This sequence belongs to the Rht family.

It localises to the cell inner membrane. The catalysed reaction is O-acetyl-L-serine(in) = O-acetyl-L-serine(out). It catalyses the reaction L-cysteine(in) = L-cysteine(out). Its function is as follows. Exporter of O-acetylserine (OAS) and cysteine. The chain is Cysteine/O-acetylserine efflux protein (eamB) from Salmonella paratyphi A (strain ATCC 9150 / SARB42).